The following is a 313-amino-acid chain: Biotin synthase (313 aa).

A Radical SAM core domain is found at 38-262; it reads REVQISTLLS…TMPHARVRLS (225 aa). Cys-53, Cys-57, and Cys-60 together coordinate [4Fe-4S] cluster. The [2Fe-2S] cluster site is built by Cys-97, Cys-128, Cys-188, and Arg-260.

Belongs to the radical SAM superfamily. Biotin synthase family. As to quaternary structure, homodimer. The cofactor is [4Fe-4S] cluster. Requires [2Fe-2S] cluster as cofactor.

The enzyme catalyses (4R,5S)-dethiobiotin + (sulfur carrier)-SH + 2 reduced [2Fe-2S]-[ferredoxin] + 2 S-adenosyl-L-methionine = (sulfur carrier)-H + biotin + 2 5'-deoxyadenosine + 2 L-methionine + 2 oxidized [2Fe-2S]-[ferredoxin]. It participates in cofactor biosynthesis; biotin biosynthesis; biotin from 7,8-diaminononanoate: step 2/2. Functionally, catalyzes the conversion of dethiobiotin (DTB) to biotin by the insertion of a sulfur atom into dethiobiotin via a radical-based mechanism. The sequence is that of Biotin synthase from Granulibacter bethesdensis (strain ATCC BAA-1260 / CGDNIH1).